The primary structure comprises 303 residues: MFKGLFICSLIAVICANALPQPEASADEDMDEREVRGIGKFLHSAGKFGKAFVGEIMKSKRDAEAVGPEAFADEDLDEREVRGIGKFLHSAKKFGKAFVGEIMNSKRDAEAVGPEAFADEDLDEREVRGIGKFLHSAKKFGKAFVGEIMNSKRDAEAVGPEAFADEDLDEREVRGIGKFLHSAKKFGKAFVGEIMNSKRDAEAVGPEAFADEDFDEREVRGIGKFLHSAKKFGKAFVGEIMNSKRDAEAVGPEAFADEDLDEREVRGIGKFLHSAKKFGKAFVGEIMNSKRDAEAVDDRRWVE.

The N-terminal stretch at 1-18 (MFKGLFICSLIAVICANA) is a signal peptide. Propeptides lie at residues 19 to 26 (LPQPEASA), 33 to 36 (REVR), 62 to 72 (DAEAVGPEAFA), 79 to 82 (REVR), 108 to 118 (DAEAVGPEAFA), 125 to 128 (REVR), 154 to 164 (DAEAVGPEAFA), 171 to 174 (REVR), 200 to 210 (DAEAVGPEAFA), 217 to 220 (REVR), 246 to 256 (DAEAVGPEAFA), 263 to 266 (REVR), and 292 to 303 (DAEAVDDRRWVE).

Belongs to the gastrin/cholecystokinin family. Magainin subfamily. In terms of tissue distribution, synthesized in the stomach and stored in a novel granular multinucleated cell in the gastric mucosa. It is stored as active, processed peptides in large granules within the granular gland secretions of the skin.

Its subcellular location is the secreted. In terms of biological role, antimicrobial peptides that inhibit the growth of numerous species of bacteria and fungi and induce osmotic lysis of protozoa. Rapidly inactivates channel catfish herpesvirus (ED(50)=48 uM) over a wide temperature range. Magainins are membrane lytic agents. The protein is Magainins (magainins) of Xenopus laevis (African clawed frog).